The chain runs to 255 residues: Serine/threonine-protein phosphatase PP1 (255 aa).

4 residues coordinate Mn(2+): Asp-2, His-4, Asp-30, and Asn-62. His-63 functions as the Proton donor in the catalytic mechanism. His-111 and His-186 together coordinate Mn(2+).

Belongs to the PPP phosphatase family. PP-1 subfamily. Mn(2+) serves as cofactor.

It catalyses the reaction O-phospho-L-seryl-[protein] + H2O = L-seryl-[protein] + phosphate. It carries out the reaction O-phospho-L-threonyl-[protein] + H2O = L-threonyl-[protein] + phosphate. This is Serine/threonine-protein phosphatase PP1 from Brassica napus (Rape).